A 282-amino-acid polypeptide reads, in one-letter code: NADPH-dependent 7-cyano-7-deazaguanine reductase (282 aa).

Ile88–Ser90 is a binding site for substrate. Residue Ser90 to Lys91 coordinates NADPH. Cys190 (thioimide intermediate) is an active-site residue. Residue Asp197 is the Proton donor of the active site. His229 to Glu230 lines the substrate pocket. Arg258 to Gly259 lines the NADPH pocket.

It belongs to the GTP cyclohydrolase I family. QueF type 2 subfamily. Homodimer.

Its subcellular location is the cytoplasm. The catalysed reaction is 7-aminomethyl-7-carbaguanine + 2 NADP(+) = 7-cyano-7-deazaguanine + 2 NADPH + 3 H(+). It functions in the pathway tRNA modification; tRNA-queuosine biosynthesis. Catalyzes the NADPH-dependent reduction of 7-cyano-7-deazaguanine (preQ0) to 7-aminomethyl-7-deazaguanine (preQ1). The protein is NADPH-dependent 7-cyano-7-deazaguanine reductase of Escherichia coli O157:H7.